The sequence spans 287 residues: MAGAKEIRSKIASVQNTQKITKAMEMVAASKMRKSQERMAASRPYAETMRSVIGHLALGNLEYKHPYLEERDVKRVGYLVVSTDRGLCGGLNINLFKKLLAEMKGWSEKGVECDLALIGSKAASFFGSVGGKIVAQVTGMGDNPSLSELIGPVKVMLQAYDEGRLDKLYIVNNKFINTMSQEPRIMQLLPLPPAEDGELKKKSWDYLYEPDPKALLDTLLRRYVESQVYQGVVENLASEQAARMVAMKAATDNGGSLIKELQLVYNKARQASITQELTEIVGGASAV.

It belongs to the ATPase gamma chain family. F-type ATPases have 2 components, CF(1) - the catalytic core - and CF(0) - the membrane proton channel. CF(1) has five subunits: alpha(3), beta(3), gamma(1), delta(1), epsilon(1). CF(0) has three main subunits: a, b and c.

It localises to the cell inner membrane. Produces ATP from ADP in the presence of a proton gradient across the membrane. The gamma chain is believed to be important in regulating ATPase activity and the flow of protons through the CF(0) complex. In Yersinia enterocolitica serotype O:8 / biotype 1B (strain NCTC 13174 / 8081), this protein is ATP synthase gamma chain.